Here is a 506-residue protein sequence, read N- to C-terminus: MISDFPLLTFITLFPISAGLLIPFLDKKGNQLVRWYTLIICLIDFVITSYIFIYKYDLNIDTLQLIDDYAWVGPIEFHWKLGVDGLSMPLILLTSFITTLATLSAWPITRNSRLFYFLMLAMYSGQLGVFLSQDILLFFLMWELELIPIYLLLSLWGGKRRLYAATKFILYTAVGSIFILMAGLTMAFYNSNVPLLDFQSLANKQYPLALEIVLYLGFLIAFAVKLPAFPLHTWLPDTHGEAHYSTCMLLAGILIKMGGYGLIRINMELLPNAHVIFSPWIALIGGIQIIYGALTSLGQRNLKRRIAYSSISHMGFVMIGISSFTDLGLSGAMMQMVSHGLIGAGLFFLAGTSYDRIRTLFLDQMGGISTTMPKIFAMFTTCALASLALPGMSGFVAELMVFLGFLKSNAYSFDFIALITFLEAVGIILTPIYLLSMLRQMFYGYRKLKLTNTLLLDASPREIFIMSCLFLPIIGIGIYPNLTIPLWNTKVEAIEQLNVFKSVGFK.

Helical transmembrane passes span 5 to 25, 35 to 55, 88 to 108, 114 to 134, 135 to 155, 168 to 188, 209 to 229, 243 to 263, 275 to 295, 309 to 329, 331 to 351, 386 to 406, 415 to 435, and 463 to 483; these read FPLL…IPFL, WYTL…FIYK, MPLI…AWPI, LFYF…LSQD, ILLF…LLSL, FILY…TMAF, ALEI…LPAF, HYST…YGLI, VIFS…GALT, SSIS…DLGL, GAMM…FLAG, SLAL…LGFL, FIAL…IYLL, and IFIM…PNLT.

The protein belongs to the complex I subunit 4 family.

It is found in the plastid. The protein localises to the chloroplast thylakoid membrane. The enzyme catalyses a plastoquinone + NADH + (n+1) H(+)(in) = a plastoquinol + NAD(+) + n H(+)(out). It carries out the reaction a plastoquinone + NADPH + (n+1) H(+)(in) = a plastoquinol + NADP(+) + n H(+)(out). The chain is NAD(P)H-quinone oxidoreductase chain 4, chloroplastic from Chaetosphaeridium globosum (Charophycean green alga).